A 393-amino-acid chain; its full sequence is CCA-adding enzyme (393 aa).

The ATP site is built by glycine 27 and arginine 30. Residues glycine 27 and arginine 30 each contribute to the CTP site. 2 residues coordinate Mg(2+): aspartate 40 and aspartate 42. The ATP site is built by arginine 111, aspartate 154, arginine 157, arginine 160, and arginine 163. Residues arginine 111, aspartate 154, arginine 157, arginine 160, and arginine 163 each contribute to the CTP site.

Belongs to the tRNA nucleotidyltransferase/poly(A) polymerase family. Bacterial CCA-adding enzyme type 3 subfamily. Homodimer. Mg(2+) serves as cofactor.

It carries out the reaction a tRNA precursor + 2 CTP + ATP = a tRNA with a 3' CCA end + 3 diphosphate. The catalysed reaction is a tRNA with a 3' CCA end + 2 CTP + ATP = a tRNA with a 3' CCACCA end + 3 diphosphate. In terms of biological role, catalyzes the addition and repair of the essential 3'-terminal CCA sequence in tRNAs without using a nucleic acid template. Adds these three nucleotides in the order of C, C, and A to the tRNA nucleotide-73, using CTP and ATP as substrates and producing inorganic pyrophosphate. tRNA 3'-terminal CCA addition is required both for tRNA processing and repair. Also involved in tRNA surveillance by mediating tandem CCA addition to generate a CCACCA at the 3' terminus of unstable tRNAs. While stable tRNAs receive only 3'-terminal CCA, unstable tRNAs are marked with CCACCA and rapidly degraded. This chain is CCA-adding enzyme, found in Listeria monocytogenes serotype 4b (strain F2365).